The primary structure comprises 147 residues: MSVLEASEIMQLIPNRYPILFMDRVDELNPGESIVVTKNVTINESFFQGHFPGNPVMPGVLIIEALAQAASILILKSEKFAGKTAYLGAIKDAKFRKIVRPGDVLKLHVQMVKQRSNMGTVSCQAMVGDKAACTTDLTFIVGATDSK.

Histidine 50 is a catalytic residue.

Belongs to the thioester dehydratase family. FabZ subfamily.

The protein localises to the cytoplasm. It carries out the reaction a (3R)-hydroxyacyl-[ACP] = a (2E)-enoyl-[ACP] + H2O. In terms of biological role, involved in unsaturated fatty acids biosynthesis. Catalyzes the dehydration of short chain beta-hydroxyacyl-ACPs and long chain saturated and unsaturated beta-hydroxyacyl-ACPs. This is 3-hydroxyacyl-[acyl-carrier-protein] dehydratase FabZ from Lactiplantibacillus plantarum (strain ATCC BAA-793 / NCIMB 8826 / WCFS1) (Lactobacillus plantarum).